We begin with the raw amino-acid sequence, 751 residues long: Transposable element P transposase (751 aa).

The THAP-type zinc finger occupies 1–77; it reads MKYCKFCCKA…LNADAVPSKV (77 aa).

Its function is as follows. P-element transposase that specifically mediates transposition of P-elements. Mediates both; precise and imprecise excision. The chain is Transposable element P transposase from Drosophila melanogaster (Fruit fly).